Here is a 423-residue protein sequence, read N- to C-terminus: uncharacterized protein (423 aa).

Belongs to the mycobacterial PPE family.

Functionally, could be required for host endothelial-cell invasion and/or intracellular survival. This is an uncharacterized protein from Mycobacterium tuberculosis (strain CDC 1551 / Oshkosh).